Here is a 251-residue protein sequence, read N- to C-terminus: Octanoyltransferase (251 aa).

The BPL/LPL catalytic domain maps to G29–V216. Substrate is bound by residues R74–H81, A146–G148, and G159–A161. Catalysis depends on C177, which acts as the Acyl-thioester intermediate.

The protein belongs to the LipB family.

Its subcellular location is the cytoplasm. The catalysed reaction is octanoyl-[ACP] + L-lysyl-[protein] = N(6)-octanoyl-L-lysyl-[protein] + holo-[ACP] + H(+). It participates in protein modification; protein lipoylation via endogenous pathway; protein N(6)-(lipoyl)lysine from octanoyl-[acyl-carrier-protein]: step 1/2. In terms of biological role, catalyzes the transfer of endogenously produced octanoic acid from octanoyl-acyl-carrier-protein onto the lipoyl domains of lipoate-dependent enzymes. Lipoyl-ACP can also act as a substrate although octanoyl-ACP is likely to be the physiological substrate. The chain is Octanoyltransferase from Koribacter versatilis (strain Ellin345).